The primary structure comprises 252 residues: 5-oxoprolinase subunit A (252 aa).

This sequence belongs to the LamB/PxpA family. Forms a complex composed of PxpA, PxpB and PxpC.

It carries out the reaction 5-oxo-L-proline + ATP + 2 H2O = L-glutamate + ADP + phosphate + H(+). In terms of biological role, catalyzes the cleavage of 5-oxoproline to form L-glutamate coupled to the hydrolysis of ATP to ADP and inorganic phosphate. This Chloroflexus aggregans (strain MD-66 / DSM 9485) protein is 5-oxoprolinase subunit A.